A 534-amino-acid chain; its full sequence is Probable bifunctional tRNA threonylcarbamoyladenosine biosynthesis protein (534 aa).

The tract at residues 1 to 324 (MICLGIEGTA…YRTDQVEVTW (324 aa)) is kae1. Fe cation-binding residues include histidine 108, histidine 112, and tyrosine 129. L-threonylcarbamoyladenylate contacts are provided by residues 129–133 (YTSGG), aspartate 161, glycine 174, glutamate 178, and asparagine 258. Aspartate 286 lines the Fe cation pocket. A Protein kinase domain is found at 335 to 534 (LPDNIKEKGA…DEIEKRGRYL (200 aa)). ATP contacts are provided by residues 340 to 348 (KEKGAEADI) and lysine 361. The Proton acceptor; for kinase activity role is filled by aspartate 455.

It in the N-terminal section; belongs to the KAE1 / TsaD family. This sequence in the C-terminal section; belongs to the protein kinase superfamily. Tyr protein kinase family. BUD32 subfamily. As to quaternary structure, component of the KEOPS complex that consists of Kae1, Bud32, Cgi121 and Pcc1; the whole complex dimerizes. Fe(2+) serves as cofactor.

It is found in the cytoplasm. It catalyses the reaction L-seryl-[protein] + ATP = O-phospho-L-seryl-[protein] + ADP + H(+). It carries out the reaction L-threonyl-[protein] + ATP = O-phospho-L-threonyl-[protein] + ADP + H(+). The catalysed reaction is L-threonylcarbamoyladenylate + adenosine(37) in tRNA = N(6)-L-threonylcarbamoyladenosine(37) in tRNA + AMP + H(+). In terms of biological role, required for the formation of a threonylcarbamoyl group on adenosine at position 37 (t(6)A37) in tRNAs that read codons beginning with adenine. Is a component of the KEOPS complex that is probably involved in the transfer of the threonylcarbamoyl moiety of threonylcarbamoyl-AMP (TC-AMP) to the N6 group of A37. The Kae1 domain likely plays a direct catalytic role in this reaction. The Bud32 domain probably displays kinase activity that regulates Kae1 function. This chain is Probable bifunctional tRNA threonylcarbamoyladenosine biosynthesis protein, found in Methanosphaera stadtmanae (strain ATCC 43021 / DSM 3091 / JCM 11832 / MCB-3).